Here is a 509-residue protein sequence, read N- to C-terminus: Maturase K (509 aa).

This sequence belongs to the intron maturase 2 family. MatK subfamily.

The protein localises to the plastid. It is found in the chloroplast. Usually encoded in the trnK tRNA gene intron. Probably assists in splicing its own and other chloroplast group II introns. This Atropa belladonna (Belladonna) protein is Maturase K.